An 861-amino-acid chain; its full sequence is Glucans biosynthesis glucosyltransferase H (861 aa).

The next 6 helical transmembrane spans lie at 142-162 (FILLLLMLAQTSVATYYMKGI), 188-208 (VLPYVIQFGILALFAILFCWV), 516-536 (VFLTGVMSYLSAPLWFFFLVL), 573-593 (LFSTTLTLLFLPKLLSVMLIW), 600-620 (FGGVIRVTLSMLLEMFFSVLL), and 683-703 (FLWWLSPIVGSLILSIPVSVI).

This sequence belongs to the glycosyltransferase 2 family. OpgH subfamily.

It localises to the cell inner membrane. The protein operates within glycan metabolism; osmoregulated periplasmic glucan (OPG) biosynthesis. Involved in the biosynthesis of osmoregulated periplasmic glucans (OPGs). This chain is Glucans biosynthesis glucosyltransferase H, found in Pseudomonas aeruginosa (strain LESB58).